Reading from the N-terminus, the 155-residue chain is MFKKNRWFWIVAVIGLILDQVTKYITVQSFEQIGDTFPIIPGVFHFTYVINTGAAFSAFRGGVGWLKWLSLLVSLGLMAFAYFGPHLNRWEQLAYGFILAGAFGNGIDRFLFGYVVDFLDFRLINFPVFNLADVFINIGIICLLISTFPHKSRVP.

4 consecutive transmembrane segments (helical) span residues 7–27 (WFWI…YITV), 39–59 (IIPG…FSAF), 63–83 (VGWL…FAYF), and 96–116 (GFIL…GYVV). Active-site residues include aspartate 117 and aspartate 133. Residues 126–146 (FPVFNLADVFINIGIICLLIS) form a helical membrane-spanning segment.

This sequence belongs to the peptidase A8 family.

The protein resides in the cell inner membrane. It carries out the reaction Release of signal peptides from bacterial membrane prolipoproteins. Hydrolyzes -Xaa-Yaa-Zaa-|-(S,diacylglyceryl)Cys-, in which Xaa is hydrophobic (preferably Leu), and Yaa (Ala or Ser) and Zaa (Gly or Ala) have small, neutral side chains.. The protein operates within protein modification; lipoprotein biosynthesis (signal peptide cleavage). Its function is as follows. This protein specifically catalyzes the removal of signal peptides from prolipoproteins. This is Lipoprotein signal peptidase from Microcystis aeruginosa (strain NIES-843 / IAM M-2473).